Here is a 372-residue protein sequence, read N- to C-terminus: Trihelix transcription factor GT-4 (372 aa).

In terms of domain architecture, Myb-like spans 47–111 (APKKRAETWA…MCTDKWRNIL (65 aa)). Serine 167 is subject to Phosphoserine.

It is found in the nucleus. In terms of biological role, probable transcription factor that binds specific DNA sequence. This is Trihelix transcription factor GT-4 (GT-4) from Arabidopsis thaliana (Mouse-ear cress).